The chain runs to 607 residues: MNLEDLKKRQEKIRNFSIIAHIDHGKSTLADRILEATETVSSREMQAQLLDSMDLERERGITIKLNAIELNYTAKDGETYIFHLIDTPGHVDFTYEVSRSLAACEGAILVVDAAQGIEAQTLANVYLALDNDLEILPVINKIDLPAADPERVRAEIEDVIGLDASEAVLASAKAGIGIEDILEQIVEKVPAPTGNVEAPLKALIFDSVYDAYRGVILQVRVMDGVVKPGDTIQLMSNGKTFDVTEVGIFTPKAIGRDFLATGDVGYIAASIKTVQDTRVGDTVTLADNPATEPLHGYKQMNPMVFAGLYPIESNKYNDLREALEKLQLNDASLQFEPETSQALGFGFRCGFLGLLHMDVIQERLEREFNIDLIMTAPSVIYKVNLTDGEAIDVSNPSEFPDPTKIDSIEEPYVKAQIMVPQEFVGAVMELAQRKRGDFVTMDYIDDNRVNVIYQIPLAEIVFDFFDKLKSSTRGYASFDYEISEYRSSKLVKMDILLNGDKVDALSFIVHKEFAYERGKLIVDKLKKIIPRQQFEVPIQAAIGQKIVARTDIKALRKNVLAKCYGGDVSRKRKLLEKQKAGKKRMKAIGSVEVPQEAFLSVLSMDEE.

In terms of domain architecture, tr-type G spans 11 to 193; sequence EKIRNFSIIA…QIVEKVPAPT (183 aa). Residues 23–28 and 140–143 each bind GTP; these read DHGKST and NKID.

Belongs to the TRAFAC class translation factor GTPase superfamily. Classic translation factor GTPase family. LepA subfamily.

Its subcellular location is the cell membrane. The enzyme catalyses GTP + H2O = GDP + phosphate + H(+). Required for accurate and efficient protein synthesis under certain stress conditions. May act as a fidelity factor of the translation reaction, by catalyzing a one-codon backward translocation of tRNAs on improperly translocated ribosomes. Back-translocation proceeds from a post-translocation (POST) complex to a pre-translocation (PRE) complex, thus giving elongation factor G a second chance to translocate the tRNAs correctly. Binds to ribosomes in a GTP-dependent manner. This Streptococcus gordonii (strain Challis / ATCC 35105 / BCRC 15272 / CH1 / DL1 / V288) protein is Elongation factor 4.